Consider the following 183-residue polypeptide: Type II secretion system protein H (183 aa).

Residues 1 to 5 (MRQRG) constitute a propeptide, leader sequence. Phenylalanine 6 is subject to N-methylphenylalanine. The chain crosses the membrane as a helical span at residues 6 to 26 (FTVLEMMLVVLLMGSAASLVI).

Type II secretion is composed of four main components: the outer membrane complex, the inner membrane complex, the cytoplasmic secretion ATPase and the periplasm-spanning pseudopilus. Interacts with core component PulG. Interacts with PulM. In terms of processing, cleaved by prepilin peptidase. Post-translationally, methylated by prepilin peptidase at the amino group of the N-terminal phenylalanine once the leader sequence is cleaved by prepilin peptidase.

It is found in the cell inner membrane. In terms of biological role, component of the type II secretion system required for the energy-dependent secretion of extracellular factors such as proteases and toxins from the periplasm. Part of the pseudopilus tip complex that is critical for the recognition and binding of secretion substrates. This is Type II secretion system protein H (pulH) from Klebsiella michiganensis (strain ATCC 8724 / DSM 4798 / JCM 20051 / NBRC 3318 / NRRL B-199 / KCTC 1686 / BUCSAV 143 / CCM 1901).